Reading from the N-terminus, the 104-residue chain is L-rhamnose mutarotase (104 aa).

A substrate-binding site is contributed by Tyr-18. Residue His-22 is the Proton donor of the active site. Residues Tyr-41 and 76 to 77 (WW) each bind substrate.

This sequence belongs to the rhamnose mutarotase family. As to quaternary structure, homodimer.

It is found in the cytoplasm. It catalyses the reaction alpha-L-rhamnose = beta-L-rhamnose. Its pathway is carbohydrate metabolism; L-rhamnose metabolism. In terms of biological role, involved in the anomeric conversion of L-rhamnose. The protein is L-rhamnose mutarotase of Mannheimia succiniciproducens (strain KCTC 0769BP / MBEL55E).